A 96-amino-acid polypeptide reads, in one-letter code: Large ribosomal subunit protein bL27 (96 aa).

Residues 1-9 (MLRLDLQFF) constitute a propeptide that is removed on maturation.

Belongs to the bacterial ribosomal protein bL27 family. The N-terminus is cleaved by ribosomal processing cysteine protease Prp.

This Anoxybacillus flavithermus (strain DSM 21510 / WK1) protein is Large ribosomal subunit protein bL27.